Consider the following 342-residue polypeptide: Phomopsin biosynthesis cluster protein B (342 aa).

Residues 1–22 are disordered; the sequence is MESIAKAKSLPNKGRTYDSQRP. The helical transmembrane segment at 87-107 threads the bilayer; that stretch reads VLIIGCAVISLFAIIGALGFA. The disordered stretch occupies residues 118–186; that stretch reads CASPAHQNPH…QCGESPDEAQ (69 aa). Residues 144 to 155 show a composition bias toward low complexity; it reads HSGSHSSSSSTN. The N-linked (GlcNAc...) asparagine glycan is linked to asparagine 248.

The protein localises to the membrane. Functionally, part of the gene cluster that mediates the biosynthesis of the phomopsins, a group of hexapeptide mycotoxins which infects lupins and causes lupinosis disease in livestock. The role of phomB within the phomopsins biosynthesis pathway has still to be determined. The pathway starts with the processing of the precursor phomA by several endopeptidases including kexin proteases as well as the cluster-specific S41 family peptidase phomP1 and the oligopeptidase phomG to produce 10 identical copies of the hexapeptide Tyr-Val-Ile-Pro-Ile-Asp. After being excised from the precursor peptide, the core peptides are cyclized and modified post-translationally by enzymes encoded within the gene cluster. The timing and order of proteolysis of the phomA precursor and PTMs are still unknown. Two tyrosinase-like enzymes, phomQ1 and phomQ2, catalyze the chlorination and hydroxylation of Tyr, respectively. PhomYb, is proposed to be involved in the construction of the macrocyclic structure. The other 4 ustYa family proteins may be involved in PTMs that generate the unique structure of phomopsin A. PhomYa is required for the hydroxylation of C-beta of Tyr. PhomYc, phomYd, and phomYe are responsible for the biosynthesis of 2,3-dehydroisoleucine (dIle), 2,3-dehydroaspartic acid (dAsp), and 3,4-dehydroproline (dPro), respectively. While dIle formation by phomYc is indispensable for the installation of dAsp by phomYd, the order of the other PTMs have not been elucidated yet. Most of the biosynthetic enzymes likely have broad substrate specificity, and thus, there might be a metabolic grid from a precursor to phomopsin A. The enzyme(s) responsible for the biosynthesis of 3,4-dehydrovaline (dVal) have also not been identified yet. Finally, phomM acts as an S-adenosylmethionine-dependent alpha-N-methyltransferase that catalyzes two successive N-methylation reactions, converting N-desmethyl-phomopsin A to phomopsin A and phomopsin A further to an N,N-dimethylated congener called phomopsin E. This is Phomopsin biosynthesis cluster protein B from Diaporthe leptostromiformis (Lupinosis disease fungus).